The sequence spans 293 residues: Homoserine kinase (293 aa).

84–94 is a binding site for ATP; the sequence is PLSRGLGSSSA.

Belongs to the GHMP kinase family. Homoserine kinase subfamily.

The protein localises to the cytoplasm. The catalysed reaction is L-homoserine + ATP = O-phospho-L-homoserine + ADP + H(+). It functions in the pathway amino-acid biosynthesis; L-threonine biosynthesis; L-threonine from L-aspartate: step 4/5. Catalyzes the ATP-dependent phosphorylation of L-homoserine to L-homoserine phosphate. The polypeptide is Homoserine kinase (Aliarcobacter butzleri (strain RM4018) (Arcobacter butzleri)).